We begin with the raw amino-acid sequence, 331 residues long: Isopentenyl-diphosphate delta-isomerase (331 aa).

Position 4–5 (4–5 (RK)) interacts with substrate. FMN-binding positions include 59–61 (AMT), serine 89, and asparagine 116. Glutamine 146 contributes to the substrate binding site. Residue glutamate 147 participates in Mg(2+) binding. Residues lysine 178, serine 203, threonine 208, 252 to 254 (GIR), and 273 to 274 (SR) each bind FMN.

This sequence belongs to the IPP isomerase type 2 family. In terms of assembly, homooctamer. Dimer of tetramers. It depends on FMN as a cofactor. NADPH is required as a cofactor. The cofactor is Mg(2+).

The protein resides in the cytoplasm. The catalysed reaction is isopentenyl diphosphate = dimethylallyl diphosphate. Its function is as follows. Involved in the biosynthesis of isoprenoids. Catalyzes the 1,3-allylic rearrangement of the homoallylic substrate isopentenyl (IPP) to its allylic isomer, dimethylallyl diphosphate (DMAPP). This chain is Isopentenyl-diphosphate delta-isomerase, found in Streptococcus mutans serotype c (strain ATCC 700610 / UA159).